The primary structure comprises 566 residues: Urease subunit alpha (566 aa).

A Urease domain is found at 129-566; it reads GGVDTHIHFI…LPLAQRYFLF (438 aa). Positions 134, 136, and 217 each coordinate Ni(2+). K217 carries the post-translational modification N6-carboxylysine. H219 contacts substrate. Ni(2+) is bound by residues H246 and H272. The active-site Proton donor is H320. Residue D360 participates in Ni(2+) binding.

This sequence belongs to the metallo-dependent hydrolases superfamily. Urease alpha subunit family. In terms of assembly, heterotrimer of UreA (gamma), UreB (beta) and UreC (alpha) subunits. Three heterotrimers associate to form the active enzyme. The cofactor is Ni cation. Post-translationally, carboxylation allows a single lysine to coordinate two nickel ions.

The protein resides in the cytoplasm. It carries out the reaction urea + 2 H2O + H(+) = hydrogencarbonate + 2 NH4(+). It functions in the pathway nitrogen metabolism; urea degradation; CO(2) and NH(3) from urea (urease route): step 1/1. The protein is Urease subunit alpha of Janthinobacterium sp. (strain Marseille) (Minibacterium massiliensis).